A 580-amino-acid polypeptide reads, in one-letter code: UPF0329 protein ECU06_0080 (580 aa).

Over residues 308 to 330 (RQKRREREMEKSMKELLRDEEKA) the composition is skewed to basic and acidic residues. Residues 308-384 (RQKRREREME…KTGKKSKGGR (77 aa)) are disordered. The segment covering 331-340 (KSKKGRKKKS) has biased composition (basic residues). Positions 351 to 363 (SETEEVEASEEME) are enriched in acidic residues. A compositionally biased stretch (basic residues) spans 372-384 (ARRKTGKKSKGGR).

It belongs to the UPF0329 family.

The protein is UPF0329 protein ECU06_0080 of Encephalitozoon cuniculi (strain GB-M1) (Microsporidian parasite).